Reading from the N-terminus, the 146-residue chain is Large ribosomal subunit protein uL13 (146 aa).

Residues 126–146 are disordered; it reads AGPKHPHAAQQPKVYEPRPRG.

The protein belongs to the universal ribosomal protein uL13 family. Part of the 50S ribosomal subunit.

In terms of biological role, this protein is one of the early assembly proteins of the 50S ribosomal subunit, although it is not seen to bind rRNA by itself. It is important during the early stages of 50S assembly. The sequence is that of Large ribosomal subunit protein uL13 from Roseiflexus castenholzii (strain DSM 13941 / HLO8).